The following is a 273-amino-acid chain: Nitrogenase iron protein (273 aa).

8–15 (GKGGIGKS) serves as a coordination point for ATP. [4Fe-4S] cluster is bound at residue cysteine 94. Arginine 97 bears the ADP-ribosylarginine; by dinitrogenase reductase ADP-ribosyltransferase mark. Cysteine 130 is a [4Fe-4S] cluster binding site.

The protein belongs to the NifH/BchL/ChlL family. In terms of assembly, homodimer. [4Fe-4S] cluster serves as cofactor. Post-translationally, the reversible ADP-ribosylation of Arg-97 inactivates the nitrogenase reductase and regulates nitrogenase activity.

It carries out the reaction N2 + 8 reduced [2Fe-2S]-[ferredoxin] + 16 ATP + 16 H2O = H2 + 8 oxidized [2Fe-2S]-[ferredoxin] + 2 NH4(+) + 16 ADP + 16 phosphate + 6 H(+). In terms of biological role, the key enzymatic reactions in nitrogen fixation are catalyzed by the nitrogenase complex, which has 2 components: the iron protein and the molybdenum-iron protein. This chain is Nitrogenase iron protein, found in Desulforapulum autotrophicum (strain ATCC 43914 / DSM 3382 / VKM B-1955 / HRM2) (Desulfobacterium autotrophicum).